The chain runs to 117 residues: Appetite-regulating hormone (117 aa).

The N-terminal stretch at 1–23 is a signal peptide; the sequence is MPSPGTVCSLLLFSMLWADLAMA. Ser-26 carries O-decanoyl serine; alternate lipidation. A lipid anchor (O-hexanoyl serine; alternate) is attached at Ser-26. Ser-26 carries the O-octanoyl serine; alternate lipid modification. Positions 29-52 are disordered; the sequence is SPEHQKVQQRKESKKPPAKLQPRA. Residues 31 to 43 show a composition bias toward basic and acidic residues; sequence EHQKVQQRKESKK. The propeptide at 52-75 is removed in mature form; that stretch reads ALEGLIHPEDTSQVEGAEDELEIR. Leucine amide is present on Leu-98. The propeptide at 99–117 is removed in mature form; the sequence is GKFLQDVLWEEADEVLADE.

This sequence belongs to the motilin family. O-octanoylated by GOAT/MBOAT4. O-octanoylation or O-decanoylation is essential for ghrelin activity. The O-decanoylated forms Ghrelin-27-C10 and Ghrelin-28-C10 differ in the length of the carbon backbone of the carboxylic acid bound to Ser-26. A small fraction of ghrelin, ghrelin-27-C10:1, ghrelin-27-C10:2, ghrelin-28-C8:1, ghrelin-28-C10:1, and ghrelin-28-C10:2, may be modified with singly or doubly unsaturated carboxylic acids. Post-translationally, amidation of Leu-98 is essential for obestatin activity.

The protein resides in the secreted. In terms of biological role, ghrelin is the ligand for growth hormone secretagogue receptor type 1 (GHSR). Induces the release of growth hormone from the pituitary. Has an appetite-stimulating effect, induces adiposity and stimulates gastric acid secretion. Involved in growth regulation. Functionally, obestatin may be the ligand for GPR39. May have an appetite-reducing effect resulting in decreased food intake. May reduce gastric emptying activity and jejunal motility. The protein is Appetite-regulating hormone (GHRL) of Felis catus (Cat).